A 248-amino-acid polypeptide reads, in one-letter code: Small ribosomal subunit protein uS2 (248 aa).

Belongs to the universal ribosomal protein uS2 family.

This Janthinobacterium sp. (strain Marseille) (Minibacterium massiliensis) protein is Small ribosomal subunit protein uS2.